The sequence spans 309 residues: Putative G-protein coupled receptor B0244.4 (309 aa).

A run of 6 helical transmembrane segments spans residues 39 to 59 (SIIF…ACFL), 82 to 102 (YIFM…MLAL), 114 to 134 (IYFL…GSYV), 162 to 182 (FAIA…MFQA), 204 to 224 (IMLV…SFVL), and 256 to 276 (WTLF…FYLV).

The protein belongs to the G-protein coupled receptor 1 family. B0244 subfamily.

The protein resides in the cell membrane. This chain is Putative G-protein coupled receptor B0244.4, found in Caenorhabditis elegans.